The primary structure comprises 191 residues: Potassium-transporting ATPase KdpC subunit (191 aa).

A helical transmembrane segment spans residues 11–31; that stretch reads LFVLLTAVTGVVYPLAVTGIA.

Belongs to the KdpC family. In terms of assembly, the system is composed of three essential subunits: KdpA, KdpB and KdpC.

The protein localises to the cell inner membrane. Its function is as follows. Part of the high-affinity ATP-driven potassium transport (or Kdp) system, which catalyzes the hydrolysis of ATP coupled with the electrogenic transport of potassium into the cytoplasm. This subunit acts as a catalytic chaperone that increases the ATP-binding affinity of the ATP-hydrolyzing subunit KdpB by the formation of a transient KdpB/KdpC/ATP ternary complex. In Dechloromonas aromatica (strain RCB), this protein is Potassium-transporting ATPase KdpC subunit.